The sequence spans 1035 residues: Probable LRR receptor-like serine/threonine-protein kinase At1g53440 (1035 aa).

Positions 1–26 (MGFFFSTRKGLLLIIFICLDIFGSNA) are cleaved as a signal peptide. Topologically, residues 27 to 607 (QLLPEDEVQT…VDTGKPLSNG (581 aa)) are extracellular. 4 N-linked (GlcNAc...) asparagine glycosylation sites follow: asparagine 46, asparagine 75, asparagine 83, and asparagine 110. LRR repeat units follow at residues 87–110 (VCRV…EFGN), 111–135 (LTRL…LSQI), 137–158 (LEIL…LGQI), 160–182 (TLTD…LGNL), 183–206 (RSLK…LSNL), 208–232 (NLTN…NWTR), and 234–254 (VRLD…ISNL). N-linked (GlcNAc...) asparagine glycosylation is found at asparagine 194, asparagine 208, and asparagine 229. Asparagine 256 and asparagine 277 each carry an N-linked (GlcNAc...) asparagine glycan. 4 LRR repeats span residues 278–302 (MTNM…IGTS), 303–326 (MTML…TFRS), 328–349 (NAFN…QFIL), and 350–372 (DSKQ…SCNQ). Residues asparagine 317, asparagine 337, asparagine 361, asparagine 386, asparagine 469, and asparagine 559 are each glycosylated (N-linked (GlcNAc...) asparagine). The helical transmembrane segment at 608-628 (VVAGIVIAACVAFGLLVLVIL) threads the bilayer. Residues 629-1035 (RLTGYLGGKE…LDDLTDVEIE (407 aa)) are Cytoplasmic-facing. Threonine 656 bears the Phosphothreonine mark. Residues 667-948 (FDPENKIGEG…QGKIKVQPPL (282 aa)) form the Protein kinase domain. ATP is bound by residues 673-681 (IGEGGFGPV) and lysine 695. Residue tyrosine 740 is modified to Phosphotyrosine. The active-site Proton acceptor is the aspartate 793. Phosphoserine is present on serine 826. 2 positions are modified to phosphothreonine: threonine 827 and threonine 832. Phosphotyrosine is present on tyrosine 840. The segment at 969 to 1035 (LSQDSESQVS…LDDLTDVEIE (67 aa)) is disordered. Positions 972–981 (DSESQVSTYT) are enriched in polar residues. Low complexity predominate over residues 1009-1023 (SLLQQEEGNSSSSSR).

It belongs to the protein kinase superfamily. Ser/Thr protein kinase family.

The protein localises to the cell membrane. The enzyme catalyses L-seryl-[protein] + ATP = O-phospho-L-seryl-[protein] + ADP + H(+). It carries out the reaction L-threonyl-[protein] + ATP = O-phospho-L-threonyl-[protein] + ADP + H(+). The chain is Probable LRR receptor-like serine/threonine-protein kinase At1g53440 from Arabidopsis thaliana (Mouse-ear cress).